Consider the following 217-residue polypeptide: Octanoyltransferase (217 aa).

One can recognise a BPL/LPL catalytic domain in the interval 32–207 (SDSPDELWIV…TLSQLLGYQQ (176 aa)). Residues 71–78 (RGGQVTYH), 138–140 (SLG), and 151–153 (GLA) contribute to the substrate site. The active-site Acyl-thioester intermediate is Cys-169.

This sequence belongs to the LipB family.

It is found in the cytoplasm. It carries out the reaction octanoyl-[ACP] + L-lysyl-[protein] = N(6)-octanoyl-L-lysyl-[protein] + holo-[ACP] + H(+). Its pathway is protein modification; protein lipoylation via endogenous pathway; protein N(6)-(lipoyl)lysine from octanoyl-[acyl-carrier-protein]: step 1/2. Its function is as follows. Catalyzes the transfer of endogenously produced octanoic acid from octanoyl-acyl-carrier-protein onto the lipoyl domains of lipoate-dependent enzymes. Lipoyl-ACP can also act as a substrate although octanoyl-ACP is likely to be the physiological substrate. The polypeptide is Octanoyltransferase (Shewanella sp. (strain MR-7)).